Here is a 202-residue protein sequence, read N- to C-terminus: Ribosomal RNA small subunit methyltransferase G (202 aa).

Residues glycine 75, phenylalanine 80, 125-126 (VQ), and arginine 139 each bind S-adenosyl-L-methionine.

This sequence belongs to the methyltransferase superfamily. RNA methyltransferase RsmG family.

The protein resides in the cytoplasm. Specifically methylates the N7 position of a guanine in 16S rRNA. In Mesomycoplasma hyopneumoniae (strain 7448) (Mycoplasma hyopneumoniae), this protein is Ribosomal RNA small subunit methyltransferase G.